Reading from the N-terminus, the 149-residue chain is uncharacterized protein (149 aa).

2 consecutive transmembrane segments (helical) span residues 91 to 111 (IFIL…LFHY) and 122 to 142 (ISIL…ICLL).

It is found in the membrane. This is an uncharacterized protein from Dictyostelium discoideum (Social amoeba).